Consider the following 445-residue polypeptide: Exodeoxyribonuclease 7 large subunit (445 aa).

Belongs to the XseA family. In terms of assembly, heterooligomer composed of large and small subunits.

It is found in the cytoplasm. The catalysed reaction is Exonucleolytic cleavage in either 5'- to 3'- or 3'- to 5'-direction to yield nucleoside 5'-phosphates.. In terms of biological role, bidirectionally degrades single-stranded DNA into large acid-insoluble oligonucleotides, which are then degraded further into small acid-soluble oligonucleotides. This Geotalea daltonii (strain DSM 22248 / JCM 15807 / FRC-32) (Geobacter daltonii) protein is Exodeoxyribonuclease 7 large subunit.